The sequence spans 256 residues: Nuclear shuttle protein (256 aa).

The short motif at 21 to 42 is the Bipartite nuclear localization signal element; the sequence is NSLIRQQSLFKRNVSKRRPFQT. The Nuclear localization signal signature appears at 81–96; sequence DIAKSLPNRTRSYIKL. Positions 150-187 are interaction with Arabidopsis thaliana NSI protein; the sequence is ELFGARIHSHGNLAIVPSLKDRFYIRHVLKRVISVEKD.

The protein belongs to the begomovirus nuclear shuttle protein family. In terms of assembly, binds to single-stranded and double-stranded viral DNA. Interacts with the host nuclear shuttle interacting (NSI) protein. This interaction may allow NSP to recruit NSI monomers to the viral genome and thus regulate nuclear export of viral genome by NSP.

It localises to the host nucleus. The protein resides in the host cytoplasm. Its subcellular location is the host cell membrane. Binds to the genomic viral ssDNA, shuttles it into and out of the cell nucleus. Begomoviruses use 2 proteins to transport their DNA from cell to cell. The nuclear shuttle protein (NSP) shuttles it between nucleus and cytoplasm and the movement protein (MP) probably transports the DNA-NSP complex to the cell periphery and facilitates movement across the cell wall. The protein is Nuclear shuttle protein of Potato yellow mosaic virus (isolate Venezuela) (PYMV).